The sequence spans 170 residues: Acetolactate synthase small subunit (170 aa).

Residues 9-83 form the ACT domain; the sequence is TLSVLVEDKP…NVIKIVEQEE (75 aa). An Isoglutamyl lysine isopeptide (Lys-Gln) (interchain with Q-Cter in protein Pup) cross-link involves residue lysine 46.

The protein belongs to the acetolactate synthase small subunit family. In terms of assembly, dimer of large and small chains.

The enzyme catalyses 2 pyruvate + H(+) = (2S)-2-acetolactate + CO2. The protein operates within amino-acid biosynthesis; L-isoleucine biosynthesis; L-isoleucine from 2-oxobutanoate: step 1/4. Its pathway is amino-acid biosynthesis; L-valine biosynthesis; L-valine from pyruvate: step 1/4. This Mycolicibacterium smegmatis (strain ATCC 700084 / mc(2)155) (Mycobacterium smegmatis) protein is Acetolactate synthase small subunit (ilvH).